The sequence spans 401 residues: Nodulation protein E (401 aa).

The Ketosynthase family 3 (KS3) domain maps to Asp-2–Gln-400. Residues Cys-162, His-294, and His-331 each act as for beta-ketoacyl synthase activity in the active site. Residues His-329–Ile-348 traverse the membrane as a helical segment.

It belongs to the thiolase-like superfamily. Beta-ketoacyl-ACP synthases family.

The protein localises to the cell inner membrane. Functionally, proposed to synthesize NOD factor fatty acyl chain. Involved in the synthesis of a highly unsaturated fatty acid moiety, which forms part of a lipo-oligosaccharide that is responsible for host specificity. The protein is Nodulation protein E (nodE) of Rhizobium leguminosarum bv. trifolii.